Here is a 706-residue protein sequence, read N- to C-terminus: Forkhead box protein P2 (706 aa).

A compositionally biased stretch (polar residues) spans 1-28 (MMQESATETISNSSMNQNGMSTLSSQLD). Disordered stretches follow at residues 1-45 (MMQE…SEVS) and 275-305 (IKHG…ITHH). Residues 287 to 296 (SSSTTSTTTS) show a composition bias toward low complexity. The C2H2-type zinc-finger motif lies at 337 to 362 (GVCKWPGCENICEDFGQFLKHLNNEH). The tract at residues 379–400 (VQQLEIQLSKERERLQAMMTHL) is leucine-zipper. A ctbp1-binding region spans residues 413–417 (PLNLV). A DNA-binding region (fork-head) is located at residues 495–585 (RPPFTYATLI…SQKITASPTL (91 aa)). The tract at residues 672-706 (DDEDCPMSLVTTANHSPELEEDRELEEEPLSEDLE) is disordered. Residues 690-706 (LEEDRELEEEPLSEDLE) show a composition bias toward acidic residues.

Dimerization is required for DNA-binding. As to expression, at stage 15, expressed in the anterior/superior eye field and the caudal branchial arch. At later stages, expression persists in the retina and in the caudal branchial arch. Expressed in the pronephros and the tip of the tail. Beginning with stage 35, expression in the brain is localized to distinct subdomains of the anterior prosencephalon, the medial mesencephalon and to lateral domains of the hindbrain.

The protein localises to the nucleus. Its function is as follows. Transcriptional repressor. This chain is Forkhead box protein P2, found in Xenopus laevis (African clawed frog).